We begin with the raw amino-acid sequence, 248 residues long: MLTKRTHPMIGKISELLVGVNRSTAAPFFDVLMTSPKSPLDFKILPQISQRNSSKRFYDDNLGGSVGLGIVAALENSNTRRITSVCRSEPNQPGRSDPVQFMSHGGSTDGEDEEMFIMDEEDYTLVTCHHGPSGSCNTRVYDKDGFECFSSKINDDRRERLFVVDVVTESPENSPEFQGLGFLNSCYLCRKKLHGQDIFIYRGEKAFCSTECRSSHIANDERKERCRSKFSTSPYTAGQIFSTGVLVT.

Residues 85-94 are compositionally biased toward polar residues; the sequence is VCRSEPNQPG. The interval 85–108 is disordered; that stretch reads VCRSEPNQPGRSDPVQFMSHGGST. Residues 181 to 224 form an FLZ-type zinc finger; it reads GFLNSCYLCRKKLHGQDIFIYRGEKAFCSTECRSSHIANDERKE.

It belongs to the FLZ family. Interacts with KIN10 and KIN11 via its FLZ-type zinc finger domain. Interacts with KINB1, KINB2 and KINB3 via its N-terminal part.

Its subcellular location is the cytoplasm. It localises to the nucleus. In terms of biological role, may act as an adapter to facilitate the interaction of SnRK1 complex with effector proteins, conferring tissue- and stimulus-type specific differences in the SnRK1 regulation pathway. The sequence is that of FCS-Like Zinc finger 14 from Arabidopsis thaliana (Mouse-ear cress).